The chain runs to 300 residues: Type II restriction enzyme HindIII (300 aa).

It carries out the reaction Endonucleolytic cleavage of DNA to give specific double-stranded fragments with terminal 5'-phosphates.. Functionally, a P subtype restriction enzyme that recognizes the double-stranded sequence 5'-AAGCTT-3' and cleaves after A-1. This chain is Type II restriction enzyme HindIII, found in Haemophilus influenzae (strain ATCC 51907 / DSM 11121 / KW20 / Rd).